We begin with the raw amino-acid sequence, 641 residues long: Bifunctional protein glk (641 aa).

The segment at 1–340 is glucokinase; that stretch reads MSTGAQTKAA…QLSNRTGGAS (340 aa). An ATP-binding site is contributed by 23-28; the sequence is ADVGGT. Positions 341–417 constitute an HTH rpiR-type domain; that stretch reads SAVFERIRQM…LKLATGLTGT (77 aa). The putative HTH-type transcriptional regulator stretch occupies residues 341–641; that stretch reads SAVFERIRQM…SHGAAPAAKD (301 aa). A DNA-binding region (H-T-H motif) is located at residues 377–396; the sequence is IVDIARKADVSQPTVIRFCR. In terms of domain architecture, SIS spans 461-600; it reads AIDILNNARR…AVGVAIRRAA (140 aa). A helical membrane pass occupies residues 576–596; it reads SMISRILHLVMIDILAVGVAI.

The protein in the N-terminal section; belongs to the bacterial glucokinase family.

It localises to the membrane. It catalyses the reaction D-glucose + ATP = D-glucose 6-phosphate + ADP + H(+). The sequence is that of Bifunctional protein glk (glk) from Burkholderia pseudomallei (strain 1710b).